The chain runs to 499 residues: GTPase Der (499 aa).

EngA-type G domains lie at 3 to 166 (PVVA…MDEV) and 211 to 384 (IKLA…DCST). GTP contacts are provided by residues 9-16 (GRPNVGKS), 56-60 (DTGGI), 118-121 (NKTD), 217-224 (GRPNVGKS), 264-268 (DTAGV), and 329-332 (NKWD). Residues 385-469 (RRVNTSMLTR…PIRIQFKEGD (85 aa)) enclose the KH-like domain.

Belongs to the TRAFAC class TrmE-Era-EngA-EngB-Septin-like GTPase superfamily. EngA (Der) GTPase family. As to quaternary structure, associates with the 50S ribosomal subunit.

In terms of biological role, GTPase that plays an essential role in the late steps of ribosome biogenesis. In Erwinia tasmaniensis (strain DSM 17950 / CFBP 7177 / CIP 109463 / NCPPB 4357 / Et1/99), this protein is GTPase Der.